The primary structure comprises 422 residues: Dihydrolipoyllysine-residue succinyltransferase component of 2-oxoglutarate dehydrogenase complex (422 aa).

Positions 1-76 (MPEVKVPELA…EVGQAIAIIG (76 aa)) constitute a Lipoyl-binding domain. Residue K42 is modified to N6-lipoyllysine. Residues 77-184 (EGSGNASKEN…APAKEEKKYN (108 aa)) form a disordered region. Composition is skewed to polar residues over residues 80–94 (GNAS…TPQQ) and 116–130 (NQAN…NATP). The Peripheral subunit-binding (PSBD) domain occupies 127–163 (NATPSARRYARENGVNLAEVSPKTNDVVRKEDIDKKQ). Positions 152-163 (DVVRKEDIDKKQ) are enriched in basic and acidic residues. The span at 164 to 176 (QAPASTQTTQQAP) shows a compositional bias: low complexity. Residues H393 and D397 contribute to the active site.

It belongs to the 2-oxoacid dehydrogenase family. As to quaternary structure, forms a 24-polypeptide structural core with octahedral symmetry. Part of the 2-oxoglutarate dehydrogenase (OGDH) complex composed of E1 (2-oxoglutarate dehydrogenase), E2 (dihydrolipoamide succinyltransferase) and E3 (dihydrolipoamide dehydrogenase); the complex contains multiple copies of the three enzymatic components (E1, E2 and E3). It depends on (R)-lipoate as a cofactor.

It catalyses the reaction N(6)-[(R)-dihydrolipoyl]-L-lysyl-[protein] + succinyl-CoA = N(6)-[(R)-S(8)-succinyldihydrolipoyl]-L-lysyl-[protein] + CoA. The protein operates within amino-acid degradation; L-lysine degradation via saccharopine pathway; glutaryl-CoA from L-lysine: step 6/6. In terms of biological role, E2 component of the 2-oxoglutarate dehydrogenase (OGDH) complex which catalyzes the second step in the conversion of 2-oxoglutarate to succinyl-CoA and CO(2). This chain is Dihydrolipoyllysine-residue succinyltransferase component of 2-oxoglutarate dehydrogenase complex (odhB), found in Staphylococcus aureus (strain Mu50 / ATCC 700699).